A 218-amino-acid chain; its full sequence is Phosphoribosylformylglycinamidine synthase subunit PurQ (218 aa).

Residues 2–218 form the Glutamine amidotransferase type-1 domain; sequence TIGIVVFPGS…IKILQALLSN (217 aa). Cys86 acts as the Nucleophile in catalysis. Residues His194 and Glu196 contribute to the active site.

In terms of assembly, part of the FGAM synthase complex composed of 1 PurL, 1 PurQ and 2 PurS subunits.

It localises to the cytoplasm. It catalyses the reaction N(2)-formyl-N(1)-(5-phospho-beta-D-ribosyl)glycinamide + L-glutamine + ATP + H2O = 2-formamido-N(1)-(5-O-phospho-beta-D-ribosyl)acetamidine + L-glutamate + ADP + phosphate + H(+). It carries out the reaction L-glutamine + H2O = L-glutamate + NH4(+). It functions in the pathway purine metabolism; IMP biosynthesis via de novo pathway; 5-amino-1-(5-phospho-D-ribosyl)imidazole from N(2)-formyl-N(1)-(5-phospho-D-ribosyl)glycinamide: step 1/2. In terms of biological role, part of the phosphoribosylformylglycinamidine synthase complex involved in the purines biosynthetic pathway. Catalyzes the ATP-dependent conversion of formylglycinamide ribonucleotide (FGAR) and glutamine to yield formylglycinamidine ribonucleotide (FGAM) and glutamate. The FGAM synthase complex is composed of three subunits. PurQ produces an ammonia molecule by converting glutamine to glutamate. PurL transfers the ammonia molecule to FGAR to form FGAM in an ATP-dependent manner. PurS interacts with PurQ and PurL and is thought to assist in the transfer of the ammonia molecule from PurQ to PurL. The chain is Phosphoribosylformylglycinamidine synthase subunit PurQ from Prochlorococcus marinus (strain SARG / CCMP1375 / SS120).